A 473-amino-acid polypeptide reads, in one-letter code: Photosystem II CP43 reaction center protein (473 aa).

A propeptide spanning residues Met1–Glu14 is cleaved from the precursor. Position 15 is an N-acetylthreonine (Thr15). Thr15 is subject to Phosphothreonine. 5 helical membrane-spanning segments follow: residues Leu69–Ala93, Leu134–Asn155, Lys178–Thr200, Lys255–Ser275, and Trp291–Ala312. [CaMn4O5] cluster is bound at residue Glu367. The helical transmembrane segment at Arg447–Pro471 threads the bilayer.

Belongs to the PsbB/PsbC family. PsbC subfamily. As to quaternary structure, PSII is composed of 1 copy each of membrane proteins PsbA, PsbB, PsbC, PsbD, PsbE, PsbF, PsbH, PsbI, PsbJ, PsbK, PsbL, PsbM, PsbT, PsbX, PsbY, PsbZ, Psb30/Ycf12, at least 3 peripheral proteins of the oxygen-evolving complex and a large number of cofactors. It forms dimeric complexes. It depends on Binds multiple chlorophylls and provides some of the ligands for the Ca-4Mn-5O cluster of the oxygen-evolving complex. It may also provide a ligand for a Cl- that is required for oxygen evolution. PSII binds additional chlorophylls, carotenoids and specific lipids. as a cofactor.

Its subcellular location is the plastid. The protein localises to the chloroplast thylakoid membrane. In terms of biological role, one of the components of the core complex of photosystem II (PSII). It binds chlorophyll and helps catalyze the primary light-induced photochemical processes of PSII. PSII is a light-driven water:plastoquinone oxidoreductase, using light energy to abstract electrons from H(2)O, generating O(2) and a proton gradient subsequently used for ATP formation. The protein is Photosystem II CP43 reaction center protein of Illicium oligandrum (Star anise).